The sequence spans 215 residues: Protein-L-isoaspartate O-methyltransferase (215 aa).

Residue Ser62 is part of the active site.

It belongs to the methyltransferase superfamily. L-isoaspartyl/D-aspartyl protein methyltransferase family.

It is found in the cytoplasm. The catalysed reaction is [protein]-L-isoaspartate + S-adenosyl-L-methionine = [protein]-L-isoaspartate alpha-methyl ester + S-adenosyl-L-homocysteine. In terms of biological role, catalyzes the methyl esterification of L-isoaspartyl residues in peptides and proteins that result from spontaneous decomposition of normal L-aspartyl and L-asparaginyl residues. It plays a role in the repair and/or degradation of damaged proteins. This is Protein-L-isoaspartate O-methyltransferase from Nitratidesulfovibrio vulgaris (strain DSM 19637 / Miyazaki F) (Desulfovibrio vulgaris).